Consider the following 148-residue polypeptide: uncharacterized protein (148 aa).

CBS domains lie at 8-68 and 74-130; these read MTAD…PNSQ and MTEK…ERAG. Positions 127–148 are disordered; that stretch reads ERAGSALSDISEGDNREEGFFH. Residues 139–148 show a composition bias toward basic and acidic residues; it reads GDNREEGFFH.

This is an uncharacterized protein from Bacillus subtilis (strain 168).